The following is a 320-amino-acid chain: Quinolinate synthase (320 aa).

Iminosuccinate contacts are provided by histidine 34 and serine 51. Cysteine 96 is a [4Fe-4S] cluster binding site. Iminosuccinate-binding positions include 122-124 (YIN) and serine 139. [4Fe-4S] cluster is bound at residue cysteine 182. Residues 208 to 210 (HPE) and threonine 225 each bind iminosuccinate. Cysteine 276 contacts [4Fe-4S] cluster.

The protein belongs to the quinolinate synthase family. Type 2 subfamily. [4Fe-4S] cluster is required as a cofactor.

It is found in the cytoplasm. The enzyme catalyses iminosuccinate + dihydroxyacetone phosphate = quinolinate + phosphate + 2 H2O + H(+). The protein operates within cofactor biosynthesis; NAD(+) biosynthesis; quinolinate from iminoaspartate: step 1/1. Its function is as follows. Catalyzes the condensation of iminoaspartate with dihydroxyacetone phosphate to form quinolinate. The chain is Quinolinate synthase from Synechococcus sp. (strain ATCC 27144 / PCC 6301 / SAUG 1402/1) (Anacystis nidulans).